We begin with the raw amino-acid sequence, 448 residues long: Neurexin-1b-beta (448 aa).

A signal peptide spans 1-38 (MFGGWRLVVWQIFSEIITRRLGFWICLYFAALSVGMIS). The Extracellular portion of the chain corresponds to 39–375 (GSEPLVRTRH…EVFRESNGTT (337 aa)). Residues 71–269 (STYVFGRQGG…DPNVRMEGSV (199 aa)) enclose the Laminin G-like domain. A helical membrane pass occupies residues 376–396 (GMVVGIVAGAALCILILLYAM). The Cytoplasmic portion of the chain corresponds to 397–448 (YKYRNRDEGSYHVDESRNYICNSNGAALKEKNTADDDSGSKSKKNKNKEYYV). Over residues 426–436 (EKNTADDDSGS) the composition is skewed to basic and acidic residues. Residues 426 to 448 (EKNTADDDSGSKSKKNKNKEYYV) are disordered.

The protein belongs to the neurexin family.

Its subcellular location is the membrane. Its function is as follows. Neuronal cell surface protein that may be involved in cell recognition and cell adhesion. May play a role in formation or maintenance of synaptic junctions. This Danio rerio (Zebrafish) protein is Neurexin-1b-beta (nrxn1b).